The following is a 239-amino-acid chain: Small ribosomal subunit protein uS2 (239 aa).

It belongs to the universal ribosomal protein uS2 family.

The polypeptide is Small ribosomal subunit protein uS2 (Parasynechococcus marenigrum (strain WH8102)).